Consider the following 436-residue polypeptide: Voltage-gated purine nucleotide uniporter SLC17A9 (436 aa).

10 helical membrane-spanning segments follow: residues 64-84, 92-112, 118-138, 158-178, 181-201, 239-259, 276-296, 316-336, 369-389, and 402-422; these read IVLSSFFWGYCLTQVVGGHLG, VILLSASAWGSITAVTPLLAH, LAFMTFSRILMGLLQGVYFPA, IVGAGSQFGTLLTGAVGSLLL, YGWQSIFYFSGGLTLLWVWYV, PAVWAAVVSQLSAACSFFILL, WIFNVVPWLVAIPASLFSGFL, GMGLGLSSVFALCLGHTSSFC, GFLFGVANTAGALAGVVGVCL, and CLFNLVAIISNLGLCTFLVFG.

It belongs to the major facilitator superfamily. Sodium/anion cotransporter family. As to expression, widely expressed, but more predominantly in adrenal gland, brain and thyroid.

The protein resides in the cytoplasmic vesicle. It is found in the secretory vesicle. The protein localises to the chromaffin granule membrane. Its subcellular location is the secretory vesicle membrane. It localises to the lysosome membrane. The catalysed reaction is ATP(in) = ATP(out). It catalyses the reaction ADP(in) = ADP(out). The enzyme catalyses GTP(in) = GTP(out). With respect to regulation, activity is chloride-dependent. Inhibited by AMP-PNP, gammaS-ATP, diadenosine triphosphate, 4,4'- diisothiocyanatostilbene-2,2'-disulfonate (DIDS) and Evans blue. Functionally, voltage-gated ATP nucleotide uniporter that can also transport the purine nucleotides ADP and GTP. Uses the membrane potential as the driving force to control ATP accumulation in lysosomes and secretory vesicles. By controlling ATP storage in lysosomes, regulates ATP-dependent proteins of these organelles. Also indirectly regulates the exocytosis of ATP through its import into lysosomes in astrocytes and secretory vesicles such as adrenal chromaffin granules, mucin granules and synaptic vesicles. The sequence is that of Voltage-gated purine nucleotide uniporter SLC17A9 from Homo sapiens (Human).